The chain runs to 248 residues: Secreted and transmembrane protein 1 (248 aa).

The signal sequence occupies residues 1 to 28 (MQTCPLAFPGHVSQALGTLLFLAASLSA). At 29 to 145 (QNEGWDSPIC…AEPQSAPDTG (117 aa)) the chain is on the extracellular side. A disulfide bridge links Cys38 with Cys55. Asn56 carries an N-linked (GlcNAc...) asparagine glycan. A helical membrane pass occupies residues 146 to 166 (FWPVPAVVTAVFILLVALVMF). The Cytoplasmic segment spans residues 167–248 (AWYRCRCSQQ…QPLFPYAADP (82 aa)).

It belongs to the SECTM family. Interacts with CD7. As to expression, detected at the highest levels in peripheral blood leukocytes and breast cancer cell lines. Found in leukocytes of the myeloid lineage, with the strongest expression observed in granulocytes and no detectable expression in lymphocytes. Expressed in thymic epithelial cells and fibroblasts.

The protein resides in the cell membrane. It localises to the secreted. Functionally, may be involved in thymocyte signaling. This Homo sapiens (Human) protein is Secreted and transmembrane protein 1 (SECTM1).